Reading from the N-terminus, the 822-residue chain is Fibroblast growth factor receptor 4 (822 aa).

The first 35 residues, 1 to 35 (MGVQKDSRDIRWNRTTRPLALLLCGLLAFSALSCA), serve as a signal peptide directing secretion. Residues N13, N72, and N125 are each glycosylated (N-linked (GlcNAc...) asparagine). Topologically, residues 36–388 (RTLPEGRKAN…AEGPETRYTD (353 aa)) are extracellular. 3 Ig-like C2-type domains span residues 39-129 (PEGR…FTIS), 157-259 (PPYS…YLLD), and 268-368 (PILQ…AWLT). C69 and C114 are joined by a disulfide. The tract at residues 136–166 (SGDDDDEDHGREDSAGDMGEDPPYSTSYRAP) is disordered. C191 and C243 are joined by a disulfide. N-linked (GlcNAc...) asparagine glycans are attached at residues N240, N277, N309, N330, and N341. C290 and C352 are oxidised to a cystine. Residues 389–409 (IIIYTSGSLALLMAAVIVVLC) form a helical membrane-spanning segment. Topologically, residues 410 to 822 (RMQLPPTKTH…HHTTTSMVGT (413 aa)) are cytoplasmic. Positions 486–774 (LVLGKPLGEG…ILATVAEEYL (289 aa)) constitute a Protein kinase domain. ATP is bound by residues 492–500 (LGEGCFGQV) and K522. D631 acts as the Proton acceptor in catalysis. Phosphotyrosine; by autocatalysis is present on residues Y661, Y662, and Y773.

Belongs to the protein kinase superfamily. Tyr protein kinase family. Fibroblast growth factor receptor subfamily. Ubiquitinated. Subject to proteasomal degradation when not fully glycosylated. In terms of processing, autophosphorylated. Binding of FGF family members together with heparan sulfate proteoglycan or heparin promotes receptor dimerization and autophosphorylation on tyrosine residues. Autophosphorylation occurs in trans between the two FGFR molecules present in the dimer.

It is found in the cell membrane. It localises to the endosome. Its subcellular location is the endoplasmic reticulum. The enzyme catalyses L-tyrosyl-[protein] + ATP = O-phospho-L-tyrosyl-[protein] + ADP + H(+). Present in an inactive conformation in the absence of bound ligand. Ligand binding leads to dimerization and activation by autophosphorylation on tyrosine residues. Its function is as follows. Tyrosine-protein kinase that acts as a cell-surface receptor for fibroblast growth factors and plays a role in the regulation of cell proliferation, differentiation and migration, and in regulation of lipid metabolism, bile acid biosynthesis, glucose uptake, vitamin D metabolism and phosphate homeostasis. Required for normal down-regulation of the expression of CYP7A1, the rate-limiting enzyme in bile acid synthesis, in response to FGF19. Phosphorylates PLCG1 and FRS2. Ligand binding leads to the activation of several signaling cascades. Activation of PLCG1 leads to the production of the cellular signaling molecules diacylglycerol and inositol 1,4,5-trisphosphate. Phosphorylation of FRS2 triggers recruitment of GRB2, GAB1, PIK3R1 and SOS1, and mediates activation of RAS, MAPK1/ERK2, MAPK3/ERK1 and the MAP kinase signaling pathway, as well as of the AKT1 signaling pathway. In Pleurodeles waltl (Iberian ribbed newt), this protein is Fibroblast growth factor receptor 4 (FGFR4).